The primary structure comprises 387 residues: Phosphoglycerate kinase (387 aa).

Substrate contacts are provided by residues 21–23 (DLN), Arg36, 59–62 (HLGR), Arg113, and Arg146. Residues Lys197, Glu314, and 340-343 (GGDT) each bind ATP.

It belongs to the phosphoglycerate kinase family. Monomer.

The protein localises to the cytoplasm. The enzyme catalyses (2R)-3-phosphoglycerate + ATP = (2R)-3-phospho-glyceroyl phosphate + ADP. Its pathway is carbohydrate degradation; glycolysis; pyruvate from D-glyceraldehyde 3-phosphate: step 2/5. This chain is Phosphoglycerate kinase, found in Yersinia pestis bv. Antiqua (strain Antiqua).